The primary structure comprises 734 residues: MALRFPRFSQGLAQDPTTRRIWFGIATAHDFESHDDITEERLYQNIFASHFGQLAIIFLWTSGNLFHVAWQGNFETWIQDPLHVRPIAHAIWDPHFGQPAVEAFTRGGALGPVNIAYSGVYQWWYTIGLRTNEDLYTGALFLLFLSALSLIGGWLHLQPKWKPRVSWFKNAESRLNHHLSGLFGVSSLAWTGHLVHVAIPASRGEYVRWNNFLNVLPHPQGLGPLFTGQWNLYAQNPDSSSHLFGTSQGSGTAILTLLGGFHPQTQSLWLTDMAHHHLAIAILFLIAGHMYRTNFGIGHSIKDLLEAHIPPGGRLGRGHKGLYDTINNSIHFQLGLALASLGVITSLVAQHMYSLPAYAFIAQDFTTQAALYTHHQYIAGFIMTGAFAHGAIFFIRDYNPEQNEDNVLARMLDHKEAIISHLSWASLFLGFHTLGLYVHNDVMLAFGTPEKQILIEPIFAQWIQSAHGKTSYGFDVLLSSTNGPAFNAGRSIWLPGWLSAINENSNSLFLTIGPGDFLVHHAIALGLHTTTLILVKGALDARGSKLMPDKKDFGYSFPCDGPGRGGTCDISAWDAFYLAVFWMLNTIGWVTFYWHWKHITLWQGNVSQFNESSTYLMGWLRDYLWLNSSQLINGYNPFGMNSLSVWAWMFLFGHLVWATGFMFLISWRGYWQELIETLAWAHERTPLANLIRWKDKPVALSIVQARLVGLAHFSVGYIFTYAAFLIASTSGKFG.

Transmembrane regions (helical) follow at residues 46 to 69 (IFASHFGQLAIIFLWTSGNLFHVA), 135 to 158 (LYTGALFLLFLSALSLIGGWLHLQ), 175 to 199 (LNHHLSGLFGVSSLAWTGHLVHVAI), 273 to 291 (MAHHHLAIAILFLIAGHMY), 330 to 353 (IHFQLGLALASLGVITSLVAQHMY), 369 to 395 (AALYTHHQYIAGFIMTGAFAHGAIFFI), 417 to 439 (AIISHLSWASLFLGFHTLGLYVH), and 517 to 535 (FLVHHAIALGLHTTTLILV). Residues Cys559 and Cys568 each contribute to the [4Fe-4S] cluster site. The next 2 membrane-spanning stretches (helical) occupy residues 575–596 (AFYLAVFWMLNTIGWVTFYWHW) and 643–665 (LSVWAWMFLFGHLVWATGFMFLI). Residues His654, Met662, and Tyr670 each contribute to the chlorophyll a site. Residue Trp671 coordinates phylloquinone. The chain crosses the membrane as a helical span at residues 707–727 (LVGLAHFSVGYIFTYAAFLIA).

This sequence belongs to the PsaA/PsaB family. The PsaA/B heterodimer binds the P700 chlorophyll special pair and subsequent electron acceptors. PSI consists of a core antenna complex that captures photons, and an electron transfer chain that converts photonic excitation into a charge separation. The eukaryotic PSI reaction center is composed of at least 11 subunits. Requires P700 is a chlorophyll a/chlorophyll a' dimer, A0 is one or more chlorophyll a, A1 is one or both phylloquinones and FX is a shared 4Fe-4S iron-sulfur center. as cofactor.

Its subcellular location is the plastid. It is found in the chloroplast thylakoid membrane. The catalysed reaction is reduced [plastocyanin] + hnu + oxidized [2Fe-2S]-[ferredoxin] = oxidized [plastocyanin] + reduced [2Fe-2S]-[ferredoxin]. Functionally, psaA and PsaB bind P700, the primary electron donor of photosystem I (PSI), as well as the electron acceptors A0, A1 and FX. PSI is a plastocyanin-ferredoxin oxidoreductase, converting photonic excitation into a charge separation, which transfers an electron from the donor P700 chlorophyll pair to the spectroscopically characterized acceptors A0, A1, FX, FA and FB in turn. Oxidized P700 is reduced on the lumenal side of the thylakoid membrane by plastocyanin. The chain is Photosystem I P700 chlorophyll a apoprotein A2 from Lobularia maritima (Sweet alyssum).